Here is a 147-residue protein sequence, read N- to C-terminus: Ubiquitin-conjugating enzyme E2-16 kDa (147 aa).

Residues 1-147 (MAFKRINKEL…AREWTRKYAI (147 aa)) form the UBC core domain. Cys107 functions as the Glycyl thioester intermediate in the catalytic mechanism.

The protein belongs to the ubiquitin-conjugating enzyme family.

It catalyses the reaction S-ubiquitinyl-[E1 ubiquitin-activating enzyme]-L-cysteine + [E2 ubiquitin-conjugating enzyme]-L-cysteine = [E1 ubiquitin-activating enzyme]-L-cysteine + S-ubiquitinyl-[E2 ubiquitin-conjugating enzyme]-L-cysteine.. It participates in protein modification; protein ubiquitination. Its function is as follows. Catalyzes the covalent attachment of ubiquitin to other proteins. May also mediate selective proteolysis pathways. This chain is Ubiquitin-conjugating enzyme E2-16 kDa (UBC1), found in Colletotrichum gloeosporioides (Anthracnose fungus).